Here is an 856-residue protein sequence, read N- to C-terminus: DNA mismatch repair protein MutS (856 aa).

ATP is bound at residue 607-614; sequence GPNMSGKS.

The protein belongs to the DNA mismatch repair MutS family.

This protein is involved in the repair of mismatches in DNA. It is possible that it carries out the mismatch recognition step. This protein has a weak ATPase activity. This is DNA mismatch repair protein MutS from Lactobacillus delbrueckii subsp. bulgaricus (strain ATCC 11842 / DSM 20081 / BCRC 10696 / JCM 1002 / NBRC 13953 / NCIMB 11778 / NCTC 12712 / WDCM 00102 / Lb 14).